We begin with the raw amino-acid sequence, 658 residues long: Threonine--tRNA ligase (658 aa).

The region spanning 1–64 is the TGS domain; the sequence is MSFSISLSFP…EQSGQVEIIT (64 aa). The segment at 246-549 is catalytic; sequence DHRRLGREMD…LIENFAGHMP (304 aa). Zn(2+)-binding residues include Cys-343, His-394, and His-526.

Belongs to the class-II aminoacyl-tRNA synthetase family. In terms of assembly, homodimer. Zn(2+) is required as a cofactor.

The protein localises to the cytoplasm. It catalyses the reaction tRNA(Thr) + L-threonine + ATP = L-threonyl-tRNA(Thr) + AMP + diphosphate + H(+). Its function is as follows. Catalyzes the attachment of threonine to tRNA(Thr) in a two-step reaction: L-threonine is first activated by ATP to form Thr-AMP and then transferred to the acceptor end of tRNA(Thr). Also edits incorrectly charged L-seryl-tRNA(Thr). The polypeptide is Threonine--tRNA ligase (Bartonella bacilliformis (strain ATCC 35685 / KC583 / Herrer 020/F12,63)).